Here is a 401-residue protein sequence, read N- to C-terminus: Imidazolonepropionase (401 aa).

2 residues coordinate Fe(3+): histidine 66 and histidine 68. Residues histidine 66 and histidine 68 each coordinate Zn(2+). 3 residues coordinate 4-imidazolone-5-propanoate: arginine 75, tyrosine 138, and histidine 171. Tyrosine 138 contacts N-formimidoyl-L-glutamate. Fe(3+) is bound at residue histidine 236. Zn(2+) is bound at residue histidine 236. Glutamine 239 contacts 4-imidazolone-5-propanoate. Aspartate 311 serves as a coordination point for Fe(3+). Aspartate 311 is a binding site for Zn(2+). Asparagine 313 and glycine 315 together coordinate N-formimidoyl-L-glutamate. Position 316 (threonine 316) interacts with 4-imidazolone-5-propanoate.

It belongs to the metallo-dependent hydrolases superfamily. HutI family. The cofactor is Zn(2+). Requires Fe(3+) as cofactor.

Its subcellular location is the cytoplasm. The catalysed reaction is 4-imidazolone-5-propanoate + H2O = N-formimidoyl-L-glutamate. It participates in amino-acid degradation; L-histidine degradation into L-glutamate; N-formimidoyl-L-glutamate from L-histidine: step 3/3. Its function is as follows. Catalyzes the hydrolytic cleavage of the carbon-nitrogen bond in imidazolone-5-propanoate to yield N-formimidoyl-L-glutamate. It is the third step in the universal histidine degradation pathway. This chain is Imidazolonepropionase, found in Acinetobacter baumannii (strain AB307-0294).